A 414-amino-acid chain; its full sequence is Histidine--tRNA ligase (414 aa).

The protein belongs to the class-II aminoacyl-tRNA synthetase family. As to quaternary structure, homodimer.

Its subcellular location is the cytoplasm. It catalyses the reaction tRNA(His) + L-histidine + ATP = L-histidyl-tRNA(His) + AMP + diphosphate + H(+). The chain is Histidine--tRNA ligase from Rickettsia conorii (strain ATCC VR-613 / Malish 7).